A 144-amino-acid polypeptide reads, in one-letter code: Large ribosomal subunit protein uL11 (144 aa).

It belongs to the universal ribosomal protein uL11 family. Part of the ribosomal stalk of the 50S ribosomal subunit. Interacts with L10 and the large rRNA to form the base of the stalk. L10 forms an elongated spine to which L12 dimers bind in a sequential fashion forming a multimeric L10(L12)X complex. In terms of processing, one or more lysine residues are methylated.

Its function is as follows. Forms part of the ribosomal stalk which helps the ribosome interact with GTP-bound translation factors. This is Large ribosomal subunit protein uL11 from Nocardia farcinica (strain IFM 10152).